The primary structure comprises 652 residues: DNA ligase (652 aa).

Residues 29–33 (DSEYD), 78–79 (SL), and Glu107 each bind NAD(+). Lys109 acts as the N6-AMP-lysine intermediate in catalysis. Residues Arg130, Glu164, Lys278, and Lys302 each coordinate NAD(+). The Zn(2+) site is built by Cys395, Cys398, Cys413, and Cys418. One can recognise a BRCT domain in the interval 577–652 (VADAALSGLT…VRDEAWLESL (76 aa)).

It belongs to the NAD-dependent DNA ligase family. LigA subfamily. Mg(2+) is required as a cofactor. The cofactor is Mn(2+).

The enzyme catalyses NAD(+) + (deoxyribonucleotide)n-3'-hydroxyl + 5'-phospho-(deoxyribonucleotide)m = (deoxyribonucleotide)n+m + AMP + beta-nicotinamide D-nucleotide.. DNA ligase that catalyzes the formation of phosphodiester linkages between 5'-phosphoryl and 3'-hydroxyl groups in double-stranded DNA using NAD as a coenzyme and as the energy source for the reaction. It is essential for DNA replication and repair of damaged DNA. The sequence is that of DNA ligase from Streptococcus pneumoniae (strain 70585).